The sequence spans 457 residues: Multidrug resistance protein MdtK (457 aa).

12 consecutive transmembrane segments (helical) span residues 11–31, 53–73, 93–113, 127–147, 159–179, 190–210, 249–269, 276–296, 313–333, 357–377, 387–407, and 417–437; these read LSAL…MGVV, IWLP…PVVA, FLAA…EYAI, AIGY…YQVL, PGMM…YIFI, GVGC…LMML, LLFE…LGVV, IALN…VATT, IAAH…AIFT, LMLL…GTGV, IFYI…YLLA, and GPAG…VMMV.

The protein belongs to the multi antimicrobial extrusion (MATE) (TC 2.A.66.1) family. MdtK subfamily.

The protein localises to the cell inner membrane. Its function is as follows. Multidrug efflux pump that functions probably as a Na(+)/drug antiporter. The chain is Multidrug resistance protein MdtK from Pectobacterium atrosepticum (strain SCRI 1043 / ATCC BAA-672) (Erwinia carotovora subsp. atroseptica).